Here is a 243-residue protein sequence, read N- to C-terminus: Chromosome partition protein MukE (243 aa).

The interval 214-243 is disordered; sequence DSLALEKQADLNEVDDNDELEDELDDEEHA. Positions 225 to 243 are enriched in acidic residues; that stretch reads NEVDDNDELEDELDDEEHA.

This sequence belongs to the MukE family. In terms of assembly, interacts, and probably forms a ternary complex, with MukF and MukB. The complex formation is stimulated by calcium or magnesium.

It is found in the cytoplasm. The protein localises to the nucleoid. In terms of biological role, involved in chromosome condensation, segregation and cell cycle progression. May participate in facilitating chromosome segregation by condensation DNA from both sides of a centrally located replisome during cell division. Probably acts via its interaction with MukB and MukF. The chain is Chromosome partition protein MukE from Pasteurella multocida (strain Pm70).